The chain runs to 578 residues: Probable ATP-dependent RNA helicase DDX55 homolog (578 aa).

The Q motif signature appears at 7-37 (PVALKTFREKLGPELLEVFDKSYKSFTDVQV). Residues 40–218 (GTHLLNLSDV…VFGLRNAKQV (179 aa)) form the Helicase ATP-binding domain. 53–60 (SPTGSGKT) lines the ATP pocket. The short motif at 166 to 169 (DEAD) is the DEAD box element. In terms of domain architecture, Helicase C-terminal spans 231-393 (TLKNYYVECR…EIKVPTNNSR (163 aa)). Residues 507–557 (AAKDKKRREKEARKLKKMGGRFRNGGGTGRKAEEKKALKRKAEEEDDAQND) form a disordered region. Over residues 510 to 526 (DKKRREKEARKLKKMGG) the composition is skewed to basic residues. The segment covering 536 to 549 (RKAEEKKALKRKAE) has biased composition (basic and acidic residues).

The protein belongs to the DEAD box helicase family. DDX55/SPB4 subfamily.

The enzyme catalyses ATP + H2O = ADP + phosphate + H(+). Its function is as follows. Probable ATP-binding RNA helicase. The chain is Probable ATP-dependent RNA helicase DDX55 homolog from Caenorhabditis elegans.